A 156-amino-acid polypeptide reads, in one-letter code: Class I hydrophobin B (156 aa).

A signal peptide spans 1–18; sequence MQFTLSAVVLALAGFSAA. Disulfide bonds link cysteine 52–cysteine 130, cysteine 60–cysteine 124, cysteine 61–cysteine 101, and cysteine 131–cysteine 149.

The protein belongs to the fungal hydrophobin family.

It localises to the secreted. The protein resides in the cell wall. Aerial growth, conidiation, and dispersal of filamentous fungi in the environment rely upon a capability of their secreting small amphipathic proteins called hydrophobins (HPBs) with low sequence identity. Class I can self-assemble into an outermost layer of rodlet bundles on aerial cell surfaces, conferring cellular hydrophobicity that supports fungal growth, development and dispersal; whereas Class II form highly ordered films at water-air interfaces through intermolecular interactions but contribute nothing to the rodlet structure. In P.expansum, hydrophobins contribute to germination, tolerance to cold stress and mycotoxins patulin and citrinin production. HfbA and HfbB are essential for fungal surface hydrophobicity. This chain is Class I hydrophobin B, found in Penicillium expansum (Blue mold rot fungus).